The sequence spans 722 residues: 1,4-alpha-glucan branching enzyme GlgB (722 aa).

The active-site Nucleophile is D401. E454 functions as the Proton donor in the catalytic mechanism.

The protein belongs to the glycosyl hydrolase 13 family. GlgB subfamily. Monomer.

The catalysed reaction is Transfers a segment of a (1-&gt;4)-alpha-D-glucan chain to a primary hydroxy group in a similar glucan chain.. Its pathway is glycan biosynthesis; glycogen biosynthesis. Catalyzes the formation of the alpha-1,6-glucosidic linkages in glycogen by scission of a 1,4-alpha-linked oligosaccharide from growing alpha-1,4-glucan chains and the subsequent attachment of the oligosaccharide to the alpha-1,6 position. The polypeptide is 1,4-alpha-glucan branching enzyme GlgB (Rubrobacter xylanophilus (strain DSM 9941 / JCM 11954 / NBRC 16129 / PRD-1)).